The following is a 260-amino-acid chain: Ribosomal RNA small subunit methyltransferase G (260 aa).

Residues 1–45 (MKQRGPAGGRSSSPKPSAPGSGAGEGPDGRSAPASQKINKASAND) are disordered. Low complexity predominate over residues 9–20 (GRSSSPKPSAPG). Residues 33 to 45 (PASQKINKASAND) are compositionally biased toward polar residues. S-adenosyl-L-methionine contacts are provided by Gly123, Phe128, and Arg193.

This sequence belongs to the methyltransferase superfamily. RNA methyltransferase RsmG family.

The protein localises to the cytoplasm. It catalyses the reaction guanosine(527) in 16S rRNA + S-adenosyl-L-methionine = N(7)-methylguanosine(527) in 16S rRNA + S-adenosyl-L-homocysteine. In terms of biological role, specifically methylates the N7 position of guanine in position 527 of 16S rRNA. The sequence is that of Ribosomal RNA small subunit methyltransferase G from Bradyrhizobium diazoefficiens (strain JCM 10833 / BCRC 13528 / IAM 13628 / NBRC 14792 / USDA 110).